The chain runs to 294 residues: Protoheme IX farnesyltransferase (294 aa).

Helical transmembrane passes span 19–39, 41–61, 89–109, 111–131, 138–158, 166–186, 218–238, and 272–292; these read PKQT…AGGM, LDAL…TTSV, VEAL…SYLI, PWTA…YTMW, LSII…WAAA, AIMI…YISI, VLMI…PIFL, and SPVE…RILW.

The protein belongs to the UbiA prenyltransferase family. Protoheme IX farnesyltransferase subfamily.

The protein localises to the cell membrane. It carries out the reaction heme b + (2E,6E)-farnesyl diphosphate + H2O = Fe(II)-heme o + diphosphate. It functions in the pathway porphyrin-containing compound metabolism; heme O biosynthesis; heme O from protoheme: step 1/1. Functionally, converts heme B (protoheme IX) to heme O by substitution of the vinyl group on carbon 2 of heme B porphyrin ring with a hydroxyethyl farnesyl side group. The polypeptide is Protoheme IX farnesyltransferase (Korarchaeum cryptofilum (strain OPF8)).